The sequence spans 545 residues: Oligopeptide-binding protein OppA (545 aa).

The N-terminal stretch at 1–20 (MKKRWSIVTLMLIFTLVLSA) is a signal peptide. C21 carries N-palmitoyl cysteine lipidation. Residue C21 is the site of S-diacylglycerol cysteine attachment. At T470 the chain carries Phosphothreonine.

The protein belongs to the bacterial solute-binding protein 5 family. In terms of assembly, the complex is composed of two ATP-binding proteins (OppD and OppF), two transmembrane proteins (OppB and OppC) and a solute-binding protein (OppA). OppA interacts with FloT in detergent-resistant membranes (DRM). Colocalizes rarely with FloT membrane assemblies.

The protein localises to the cell membrane. The protein resides in the membrane raft. In terms of biological role, part of the ABC transporter complex OppABCDF involved in the uptake of oligopeptides. Plays an important nutritional role. Binds peptides containing up to five amino acids residues regardless of their sequence, with highest affinity for tetra- and pentapeptides. Binds to the sporulation-promoting peptide PhrE (Ser-Arg-Asn-Val-Thr). Required for sporulation and genetic competence. In Bacillus subtilis (strain 168), this protein is Oligopeptide-binding protein OppA.